The following is a 66-amino-acid chain: Small archaeal modifier protein 2 (66 aa).

Lys-58 participates in a covalent cross-link: Glycyl lysine isopeptide (Lys-Gly) (interchain with G-Cter in SAMP2). Position 66 is a 1-thioglycine; alternate (Gly-66). Residue Gly-66 is modified to Glycyl adenylate; alternate. A Glycyl lysine isopeptide (Gly-Lys) (interchain with K-? in acceptor proteins); alternate cross-link involves residue Gly-66.

As to quaternary structure, monomer. Monomeric and polymeric forms interact with NcsA. Post-translationally, the C-terminal glycine is likely acyl-adenylated (-COAMP) by UbaA, and also probably thiocarboxylated (-COSH) to function in sulfur transfer.

Its function is as follows. Functions as a protein modifier covalently attached to lysine residues of substrate proteins, as well as a sulfur carrier in tRNA thiolation. The protein modification process is termed sampylation and involves the formation of an isopeptide bond between the SAMP2 C-terminal glycine carboxylate and the epsilon-amino group of lysine residues on target proteins. Is able to form polymeric chains with itself at Lys-58, similar to ubiquitin and other ubiquitin-like proteins. May serve as a proteolytic signal in the cell to target proteins for degradation by proteasomes. The chain is Small archaeal modifier protein 2 (samp2) from Haloferax volcanii (strain ATCC 29605 / DSM 3757 / JCM 8879 / NBRC 14742 / NCIMB 2012 / VKM B-1768 / DS2) (Halobacterium volcanii).